A 933-amino-acid chain; its full sequence is Progesterone receptor (933 aa).

An AF3; mediates transcriptional activation region spans residues 1–164 (MTELKAKGPR…PATQGVLSPL (164 aa)). A disordered region spans residues 1-256 (MTELKAKGPR…AAAGGGAAAV (256 aa)). A modulating, Pro-Rich region spans residues 1–566 (MTELKAKGPR…YSFESLPQKI (566 aa)). Position 20 is a phosphoserine (S20). The short motif at 55-59 (LDGLL) is the LXXL motif 1 element. Residue S81 is modified to Phosphoserine. The LXXL motif 2 motif lies at 115-119 (LDTLL). Residues S130 and S162 each carry the phosphoserine modification. Positions 165–305 (MSRSGCKAGD…LATTMMDFIH (141 aa)) are mediates transcriptional transrepression. Residues 183-187 (KVLPR) carry the Nuclear localization signal motif. Residues S190 and S213 each carry the phosphoserine modification. Positions 220–231 (EVEEEDGSESEE) are enriched in acidic residues. Over residues 232 to 246 (SAGPLLKGKPRALGG) the composition is skewed to low complexity. Residue S294 is modified to Phosphoserine; by MAPK1. Residues 331–378 (GGAGAASAFAPPRSSPSASSTPVAVGDFPDCAYPPDAEPKDDAYPLYS) form a disordered region. Low complexity predominate over residues 335 to 350 (AASAFAPPRSSPSASS). The residue at position 345 (S345) is a Phosphoserine; by MAPK. K388 participates in a covalent cross-link: Glycyl lysine isopeptide (Lys-Gly) (interchain with G-Cter in SUMO); alternate. K388 participates in a covalent cross-link: Glycyl lysine isopeptide (Lys-Gly) (interchain with G-Cter in ubiquitin); alternate. S400 is modified (phosphoserine; by CDK2). Positions 415 to 452 (PDFPLGPPPPLPPRAPPSRPGEAAVTAAPASASVSSAS) are disordered. A compositionally biased stretch (pro residues) spans 418–433 (PLGPPPPLPPRAPPSR). The segment covering 434-452 (PGEAAVTAAPASASVSSAS) has biased composition (low complexity). The AF1; mediates transcriptional activation stretch occupies residues 456–546 (STLECILYKA…VYPPYLNYLR (91 aa)). A Glycyl lysine isopeptide (Lys-Gly) (interchain with G-Cter in SUMO) cross-link involves residue K531. 2 consecutive NR C4-type zinc fingers follow at residues 567 to 587 (CLICGDEASGCHYGVLTCGSC) and 603 to 627 (CAGRNDCIVDKIRRKNCPACRLRKC). The segment at residues 567 to 639 (CLICGDEASG…AGMVLGGRKF (73 aa)) is a DNA-binding region (nuclear receptor). Phosphoserine is present on S676. Positions 679–913 (QDIQLIPPLI…EFPEMMSEVI (235 aa)) constitute an NR LBD domain. Residues 687–933 (LINLLMSIEP…MVKPLLFHKK (247 aa)) form an AF2; mediates transcriptional activation region. Position 766 (R766) interacts with progesterone.

Belongs to the nuclear hormone receptor family. As to quaternary structure, interacts with SMARD1 and UNC45A. Interacts with CUEDC2; the interaction promotes ubiquitination, decreases sumoylation, and represses transcriptional activity. Interacts with PIAS3; the interaction promotes sumoylation of PR in a hormone-dependent manner, inhibits DNA-binding, and alters nuclear export. Interacts with SP1; the interaction requires ligand-induced phosphorylation on Ser-345 by ERK1/2-MAPK. Interacts with PRMT2. Interacts with NCOA2 and NCOA1. Interacts with KLF9. Interacts with GTF2B. Post-translationally, phosphorylated on multiple serine sites. Several of these sites are hormone-dependent. Phosphorylation on Ser-294 is highly hormone-dependent and modulates ubiquitination and sumoylation on Lys-388. Phosphorylation on Ser-102 and Ser-345 also requires induction by hormone. Basal phosphorylation on Ser-81, Ser-162, Ser-190 and Ser-400 is increased in response to progesterone and can be phosphorylated in vitro by the CDK2-A1 complex. Increased levels of phosphorylation on Ser-400 also in the presence of EGF, heregulin, IGF, PMA and FBS. Phosphorylation at this site by CDK2 is ligand-independent, and increases nuclear translocation and transcriptional activity. Phosphorylation at Ser-162 and Ser-294, but not at Ser-190, is impaired during the G(2)/M phase of the cell cycle. Phosphorylation on Ser-345 by ERK1/2 MAPK is required for interaction with SP1. Sumoylation is hormone-dependent and represses transcriptional activity. Sumoylation on all three sites is enhanced by PIAS3. Desumoylated by SENP1. Sumoylation on Lys-388, the main site of sumoylation, is repressed by ubiquitination on the same site, and modulated by phosphorylation at Ser-294. In terms of processing, ubiquitination is hormone-dependent and represses sumoylation on the same site. Promoted by MAPK-mediated phosphorylation on Ser-294. Ubiquitinated by UBR5, leading to its degradation: UBR5 specifically recognizes and binds ligand-bound PGR when it is not associated with coactivators (NCOAs). In presence of NCOAs, the UBR5-degron is not accessible, preventing its ubiquitination and degradation. Post-translationally, palmitoylated by ZDHHC7 and ZDHHC21. Palmitoylation is required for plasma membrane targeting and for rapid intracellular signaling via ERK and AKT kinases and cAMP generation.

Its subcellular location is the nucleus. The protein localises to the cytoplasm. Its function is as follows. The steroid hormones and their receptors are involved in the regulation of eukaryotic gene expression and affect cellular proliferation and differentiation in target tissues. Transcriptional activator of several progesteron-dependent promoters in a variety of cell types. Involved in activation of SRC-dependent MAPK signaling on hormone stimulation. The polypeptide is Progesterone receptor (PGR) (Pan paniscus (Pygmy chimpanzee)).